Here is a 158-residue protein sequence, read N- to C-terminus: Class 10 plant pathogenesis-related protein 2A (158 aa).

A trans-zeatin-binding site is contributed by Asp8. 3 residues coordinate Ca(2+): Pro32, Val35, and Ile38. The trans-zeatin site is built by Glu60, His69, Tyr81, and Tyr83.

It belongs to the BetVI family.

It localises to the cytoplasm. The protein resides in the cytosol. Functionally, class II ribonuclease (RNase). Binds to cytokinins. Interacts with melatonin. The polypeptide is Class 10 plant pathogenesis-related protein 2A (Lupinus luteus (European yellow lupine)).